A 254-amino-acid chain; its full sequence is 4-hydroxy-tetrahydrodipicolinate reductase (254 aa).

7-12 (GASGRI) is a binding site for NAD(+). R35 contributes to the NADP(+) binding site. Residues 91–93 (GTT) and 115–118 (AHNM) contribute to the NAD(+) site. H147 serves as the catalytic Proton donor/acceptor. H148 provides a ligand contact to (S)-2,3,4,5-tetrahydrodipicolinate. K151 serves as the catalytic Proton donor. 157-158 (GT) contributes to the (S)-2,3,4,5-tetrahydrodipicolinate binding site.

The protein belongs to the DapB family.

The protein resides in the cytoplasm. It catalyses the reaction (S)-2,3,4,5-tetrahydrodipicolinate + NAD(+) + H2O = (2S,4S)-4-hydroxy-2,3,4,5-tetrahydrodipicolinate + NADH + H(+). It carries out the reaction (S)-2,3,4,5-tetrahydrodipicolinate + NADP(+) + H2O = (2S,4S)-4-hydroxy-2,3,4,5-tetrahydrodipicolinate + NADPH + H(+). Its pathway is amino-acid biosynthesis; L-lysine biosynthesis via DAP pathway; (S)-tetrahydrodipicolinate from L-aspartate: step 4/4. Functionally, catalyzes the conversion of 4-hydroxy-tetrahydrodipicolinate (HTPA) to tetrahydrodipicolinate. In Helicobacter acinonychis (strain Sheeba), this protein is 4-hydroxy-tetrahydrodipicolinate reductase.